A 507-amino-acid polypeptide reads, in one-letter code: E3 SUMO-protein ligase PIAS4 (507 aa).

Ala-2 is modified (N-acetylalanine). Lys-9 participates in a covalent cross-link: Glycyl lysine isopeptide (Lys-Gly) (interchain with G-Cter in SUMO2). The SAP domain maps to 12–46 (VMSFRVSDLQMLLGFVGRSKSGLKHELVTRALQLV). The LXXLL motif motif lies at 20–24 (LQMLL). Residue Lys-35 forms a Glycyl lysine isopeptide (Lys-Gly) (interchain with G-Cter in SUMO); alternate linkage. A Glycyl lysine isopeptide (Lys-Gly) (interchain with G-Cter in SUMO2); alternate cross-link involves residue Lys-35. Glycyl lysine isopeptide (Lys-Gly) (interchain with G-Cter in SUMO2) cross-links involve residues Lys-56, Lys-59, Lys-68, and Lys-69. Lys-107 carries the post-translational modification N6-acetyllysine. Positions 112 to 272 (LGRLPTKTLK…SVALYLVRQL (161 aa)) constitute a PINIT domain. A Glycyl lysine isopeptide (Lys-Gly) (interchain with G-Cter in SUMO2) cross-link involves residue Lys-118. A Glycyl lysine isopeptide (Lys-Gly) (interchain with G-Cter in SUMO) cross-link involves residue Lys-128. The SP-RING-type zinc finger occupies 304-385 (PDSEIATTGV…LSKILSECEG (82 aa)). Cys-335, His-337, Cys-358, and Cys-361 together coordinate Zn(2+). Positions 426–507 (APASSTPGIG…PFQKGLVPAC (82 aa)) are disordered. Residues 434 to 450 (IGSGLSGPGSAGSGAGA) are compositionally biased toward gly residues. The segment covering 474–489 (SEDEDEDEDDDEDEDE) has biased composition (acidic residues).

Belongs to the PIAS family. Interacts with AR, GATA2, LEF1, TP53 and STAT1 (IFNG-induced). Interacts with TICAM1. Interacts with MTA1. Interacts with PRDM1/Blimp-1. Interacts with TRIM32 upon treatment with UVB and TNF-alpha. As to quaternary structure, (Microbial infection) Interacts ewith Moloney murine leukemia virus Capsid protein p30. Post-translationally, sumoylated. Lys-35 is the main site of sumoylation. Sumoylation is required for TCF4 sumoylation and transcriptional activation. Represses LEF1 transcriptional activity. SUMO1 is the preferred conjugate. In terms of processing, ubiquitinated by TRIM32 upon treatment with UVB and TNF-alpha. In terms of tissue distribution, widely expressed, with highest levels in testis. Also expressed in vascular endothelial cells, in primary keratinocytes and in the CNS, including cortex, olfactory bulb, spinal cord, thalamus and trigeminal ganglion. Low expression, if any, in liver and lung.

It localises to the nucleus. It is found in the PML body. It carries out the reaction S-ubiquitinyl-[E2 ubiquitin-conjugating enzyme]-L-cysteine + [acceptor protein]-L-lysine = [E2 ubiquitin-conjugating enzyme]-L-cysteine + N(6)-ubiquitinyl-[acceptor protein]-L-lysine.. The protein operates within protein modification; protein sumoylation. Functions as an E3-type small ubiquitin-like modifier (SUMO) ligase, stabilizing the interaction between UBE2I and the substrate, and as a SUMO-tethering factor. Mediates sumoylation of ALKBH5, AXIN1, CEBPA, KLF8, GATA2, PARK7, HERC2, MYB, TCF4 and RNF168. Plays a crucial role as a transcriptional coregulation in various cellular pathways, including the STAT pathway, the p53/TP53 pathway, the Wnt pathway and the steroid hormone signaling pathway. Involved in gene silencing. In Wnt signaling, represses LEF1 and enhances TCF4 transcriptional activities through promoting their sumoylations. Enhances the sumoylation of MTA1 and may participate in its paralog-selective sumoylation. Binds to AT-rich DNA sequences, known as matrix or scaffold attachment regions (MARs/SARs). Catalyzes conjugation of SUMO2 to KAT5 in response to DNA damage, facilitating repair of DNA double-strand breaks (DSBs) via homologous recombination (HR). Mediates sumoylation of PARP1 in response to PARP1 trapping to chromatin. Mediates sumoylation of KLF8, repressiing KLF8 transcriptional activity and cell cycle progression into G(1) phase. Sumoylates ALKBH5 downstream of MAPK8/JNK1 and MAPK9/JNK2 in response to reactive oxygen species (ROS), inhibiting ALKBH5 RNA demethylase activity. The chain is E3 SUMO-protein ligase PIAS4 (Pias4) from Mus musculus (Mouse).